A 362-amino-acid polypeptide reads, in one-letter code: NAD(P)H-quinone oxidoreductase subunit 1, chloroplastic (362 aa).

The next 8 membrane-spanning stretches (helical) occupy residues 27-47, 103-123, 128-148, 164-184, 202-222, 247-267, 303-323, and 342-362; these read IWIL…LVIV, IAVI…HFVL, IGVF…LMAG, AAQS…ISLL, FFGW…ISSL, YSGI…LVSS, VIGI…SITI, and FLLP…LVSL.

Belongs to the complex I subunit 1 family. As to quaternary structure, NDH is composed of at least 16 different subunits, 5 of which are encoded in the nucleus.

The protein localises to the plastid. It localises to the chloroplast thylakoid membrane. It carries out the reaction a plastoquinone + NADH + (n+1) H(+)(in) = a plastoquinol + NAD(+) + n H(+)(out). It catalyses the reaction a plastoquinone + NADPH + (n+1) H(+)(in) = a plastoquinol + NADP(+) + n H(+)(out). NDH shuttles electrons from NAD(P)H:plastoquinone, via FMN and iron-sulfur (Fe-S) centers, to quinones in the photosynthetic chain and possibly in a chloroplast respiratory chain. The immediate electron acceptor for the enzyme in this species is believed to be plastoquinone. Couples the redox reaction to proton translocation, and thus conserves the redox energy in a proton gradient. The polypeptide is NAD(P)H-quinone oxidoreductase subunit 1, chloroplastic (Saccharum hybrid (Sugarcane)).